The primary structure comprises 114 residues: Hydrogenase maturation factor HypA (114 aa).

Position 2 (His-2) interacts with Ni(2+). Zn(2+)-binding residues include Cys-73, Cys-76, Cys-90, and Cys-93.

The protein belongs to the HypA/HybF family.

Involved in the maturation of [NiFe] hydrogenases. Required for nickel insertion into the metal center of the hydrogenase. In Chloroflexus aurantiacus (strain ATCC 29366 / DSM 635 / J-10-fl), this protein is Hydrogenase maturation factor HypA.